The following is a 183-amino-acid chain: dCTP deaminase (183 aa).

DCTP-binding positions include 97-102 (RSSFAR) and Asp113. Residue Glu123 is the Proton donor/acceptor of the active site. Positions 155 and 162 each coordinate dCTP.

Belongs to the dCTP deaminase family. In terms of assembly, homotrimer.

It carries out the reaction dCTP + H2O + H(+) = dUTP + NH4(+). The protein operates within pyrimidine metabolism; dUMP biosynthesis; dUMP from dCTP (dUTP route): step 1/2. Catalyzes the deamination of dCTP to dUTP. In Sulfurisphaera tokodaii (strain DSM 16993 / JCM 10545 / NBRC 100140 / 7) (Sulfolobus tokodaii), this protein is dCTP deaminase.